Consider the following 259-residue polypeptide: UPF0246 protein MADE_1015435 (259 aa).

It belongs to the UPF0246 family.

This is UPF0246 protein MADE_1015435 from Alteromonas mediterranea (strain DSM 17117 / CIP 110805 / LMG 28347 / Deep ecotype).